The following is a 416-amino-acid chain: Serine hydroxymethyltransferase (416 aa).

(6S)-5,6,7,8-tetrahydrofolate-binding positions include Leu-121 and 125 to 127 (GHL). Lys-229 is modified (N6-(pyridoxal phosphate)lysine).

Belongs to the SHMT family. Homodimer. Pyridoxal 5'-phosphate is required as a cofactor.

It localises to the cytoplasm. It carries out the reaction (6R)-5,10-methylene-5,6,7,8-tetrahydrofolate + glycine + H2O = (6S)-5,6,7,8-tetrahydrofolate + L-serine. It functions in the pathway one-carbon metabolism; tetrahydrofolate interconversion. It participates in amino-acid biosynthesis; glycine biosynthesis; glycine from L-serine: step 1/1. Catalyzes the reversible interconversion of serine and glycine with tetrahydrofolate (THF) serving as the one-carbon carrier. This reaction serves as the major source of one-carbon groups required for the biosynthesis of purines, thymidylate, methionine, and other important biomolecules. Also exhibits THF-independent aldolase activity toward beta-hydroxyamino acids, producing glycine and aldehydes, via a retro-aldol mechanism. In Neisseria meningitidis serogroup C (strain 053442), this protein is Serine hydroxymethyltransferase.